The primary structure comprises 636 residues: Golgin subfamily A member 8F (636 aa).

Disordered regions lie at residues 1–72 (MAEE…SATL) and 107–127 (NKQV…KQKA). Positions 38–50 (TNGSIHETATSGG) are enriched in polar residues. Coiled-coil stretches lie at residues 93–148 (VSQL…LNTD), 211–263 (LEQS…MSQE), and 306–412 (EVEL…QQKQ). The segment covering 109–127 (QVEHQLEEEKKANNEKQKA) has biased composition (basic and acidic residues). Disordered stretches follow at residues 344–364 (LREQ…QEER), 422–449 (ALPG…SIPQ), 496–537 (PITK…GVAA), and 588–612 (PVQG…QDHQ). A compositionally biased stretch (basic and acidic residues) spans 429 to 441 (GGGHLDSEGEEAP). The span at 509–522 (PGGGHHQAGPGQGG) shows a compositional bias: gly residues.

The protein belongs to the GOLGA8 family.

The polypeptide is Golgin subfamily A member 8F (Homo sapiens (Human)).